The primary structure comprises 234 residues: ATP-dependent dethiobiotin synthetase BioD (234 aa).

Residue aspartate 12–phenylalanine 17 participates in ATP binding. Threonine 16 contacts Mg(2+). Lysine 37 is an active-site residue. Threonine 41 is a substrate binding site. ATP is bound by residues aspartate 54 and glutamate 115 to glycine 118. Mg(2+) is bound by residues aspartate 54 and glutamate 115.

This sequence belongs to the dethiobiotin synthetase family. In terms of assembly, homodimer. Mg(2+) serves as cofactor.

The protein resides in the cytoplasm. It catalyses the reaction (7R,8S)-7,8-diammoniononanoate + CO2 + ATP = (4R,5S)-dethiobiotin + ADP + phosphate + 3 H(+). Its pathway is cofactor biosynthesis; biotin biosynthesis; biotin from 7,8-diaminononanoate: step 1/2. In terms of biological role, catalyzes a mechanistically unusual reaction, the ATP-dependent insertion of CO2 between the N7 and N8 nitrogen atoms of 7,8-diaminopelargonic acid (DAPA, also called 7,8-diammoniononanoate) to form a ureido ring. The sequence is that of ATP-dependent dethiobiotin synthetase BioD from Lysinibacillus sphaericus (Bacillus sphaericus).